The following is a 193-amino-acid chain: Probable thymidylate kinase (193 aa).

Residue G7 to T14 coordinates ATP.

The protein belongs to the thymidylate kinase family.

It carries out the reaction dTMP + ATP = dTDP + ADP. The chain is Probable thymidylate kinase from Pyrobaculum calidifontis (strain DSM 21063 / JCM 11548 / VA1).